A 206-amino-acid chain; its full sequence is N-(5'-phosphoribosyl)anthranilate isomerase (206 aa).

It belongs to the TrpF family.

It catalyses the reaction N-(5-phospho-beta-D-ribosyl)anthranilate = 1-(2-carboxyphenylamino)-1-deoxy-D-ribulose 5-phosphate. The protein operates within amino-acid biosynthesis; L-tryptophan biosynthesis; L-tryptophan from chorismate: step 3/5. This Pseudomonas putida (strain ATCC 47054 / DSM 6125 / CFBP 8728 / NCIMB 11950 / KT2440) protein is N-(5'-phosphoribosyl)anthranilate isomerase.